Consider the following 138-residue polypeptide: Small ribosomal subunit protein uS8 (138 aa).

It belongs to the universal ribosomal protein uS8 family. As to quaternary structure, part of the 30S ribosomal subunit. Contacts proteins S5 and S12.

One of the primary rRNA binding proteins, it binds directly to 16S rRNA central domain where it helps coordinate assembly of the platform of the 30S subunit. The protein is Small ribosomal subunit protein uS8 (rpsH) of Thermus thermophilus (strain ATCC BAA-163 / DSM 7039 / HB27).